The sequence spans 228 residues: MPKYYCEYCDIYLTHSSPVGRRQHVQGRKHISAKIEYFQNLLREEGITPQNFLGFLGPRALNNILGNPMMNNMMPGNFPMHMKHNNMKHHSHYSRRSHRHHMPHGRYGRERHGHYSYSSKYHSHPMHMNSSSMSSMSGFPYNEHSGNFFSLSNSMHGNGKMGNMVIRDLVSNVNIENDLVKDNPNEERNGDSAIANQPSTMHHEEDQDDPANATGGTANNNDNVSINA.

A Matrin-type zinc finger spans residues 4 to 36; sequence YYCEYCDIYLTHSSPVGRRQHVQGRKHISAKIE. A compositionally biased stretch (basic and acidic residues) spans 179-190; it reads LVKDNPNEERNG. Residues 179 to 228 are disordered; it reads LVKDNPNEERNGDSAIANQPSTMHHEEDQDDPANATGGTANNNDNVSINA. The segment covering 211 to 221 has biased composition (low complexity); the sequence is ANATGGTANNN.

The protein belongs to the U1 small nuclear ribonucleoprotein C family. In terms of assembly, U1 snRNP is composed of the 7 core Sm proteins B/B', D1, D2, D3, E, F and G that assemble in a heptameric protein ring on the Sm site of the small nuclear RNA to form the core snRNP, and at least 3 U1 snRNP-specific proteins U1-70K, U1-A and U1-C. U1-C interacts with U1 snRNA and the 5' splice-site region of the pre-mRNA.

It localises to the nucleus. In terms of biological role, component of the spliceosomal U1 snRNP, which is essential for recognition of the pre-mRNA 5' splice-site and the subsequent assembly of the spliceosome. U1-C is directly involved in initial 5' splice-site recognition for both constitutive and regulated alternative splicing. The interaction with the 5' splice-site seems to precede base-pairing between the pre-mRNA and the U1 snRNA. Stimulates commitment or early (E) complex formation by stabilizing the base pairing of the 5' end of the U1 snRNA and the 5' splice-site region. This chain is U1 small nuclear ribonucleoprotein C, found in Plasmodium knowlesi (strain H).